We begin with the raw amino-acid sequence, 702 residues long: Capsid vertex component 1 (702 aa).

Positions 200–244 are disordered; sequence MGESGTPTPQASSVSGGAGPAVVGTPDPPISPEEQLTAPGGDTAT. Over residues 210 to 224 the composition is skewed to low complexity; it reads ASSVSGGAGPAVVGT.

Belongs to the herpesviridae CVC1 protein family. Interacts (via C-terminus) with capsid vertex component 2/CVC2.

The protein resides in the virion. It localises to the host nucleus. Functionally, capsid vertex-specific component that plays a role during viral DNA encapsidation, assuring correct genome cleavage and presumably stabilizing capsids that contain full-length viral genomes. This is Capsid vertex component 1 from Homo sapiens (Human).